A 355-amino-acid polypeptide reads, in one-letter code: Squamosa promoter-binding protein-like 15 (355 aa).

The segment at 1-27 (MELLKGSGLNQTESGGSSSTESSSLSG) is disordered. Low complexity predominate over residues 12–27 (TESGGSSSTESSSLSG). The SBP-type zinc-finger motif lies at 61–138 (TARCQVEGCR…ACHNERRRKP (78 aa)). Residues Cys64, Cys69, Cys86, His89, Cys105, Cys108, His112, and Cys124 each coordinate Zn(2+). A Bipartite nuclear localization signal motif is present at residues 121–137 (KRSCRRRLACHNERRRK).

It is found in the nucleus. Its function is as follows. Probable transcription factor required for the flowering response to vernalization in the shoot apical meristem (SAM). Defines the competence of shoot meristems to flower in response to vernalization in perennials. The chain is Squamosa promoter-binding protein-like 15 from Arabis alpina (Alpine rock-cress).